The sequence spans 313 residues: Uracil-DNA glycosylase (313 aa).

Positions 35–68 are disordered; that stretch reads DEPMPKKCRRPAGPPKGFISTRGDTSPSSDNNHI. Polar residues predominate over residues 56-68; sequence RGDTSPSSDNNHI. The active-site Proton acceptor is the Asp-153.

Belongs to the uracil-DNA glycosylase (UDG) superfamily. UNG family.

It localises to the host nucleus. It carries out the reaction Hydrolyzes single-stranded DNA or mismatched double-stranded DNA and polynucleotides, releasing free uracil.. In terms of biological role, excises uracil residues from the DNA which can arise as a result of misincorporation of dUMP residues by DNA polymerase or deamination of cytosines. Therefore may reduce deleterious uracil incorporation into the viral genome, particularly in terminally differentiated cells which lack DNA repair enzymes. This chain is Uracil-DNA glycosylase (MDV014), found in Gallus gallus (Chicken).